A 126-amino-acid polypeptide reads, in one-letter code: MADLQKLVDDLSALTVLEAAELSKLLEEKWGVSAAAAVAVAAPAGGAGAGAPAAEVKDEFDVILTGDGGKKINVIKEVRAITGLGLTEAKTLVESAPKAVKEGVNKDEAEKLKKQLEEAGATVELK.

The protein belongs to the bacterial ribosomal protein bL12 family. In terms of assembly, homodimer. Part of the ribosomal stalk of the 50S ribosomal subunit. Forms a multimeric L10(L12)X complex, where L10 forms an elongated spine to which 2 to 4 L12 dimers bind in a sequential fashion. Binds GTP-bound translation factors.

In terms of biological role, forms part of the ribosomal stalk which helps the ribosome interact with GTP-bound translation factors. Is thus essential for accurate translation. The sequence is that of Large ribosomal subunit protein bL12 from Rhizorhabdus wittichii (strain DSM 6014 / CCUG 31198 / JCM 15750 / NBRC 105917 / EY 4224 / RW1) (Sphingomonas wittichii).